The following is a 222-amino-acid chain: DUF1769 family protein (222 aa).

Belongs to the UPF0590 family.

Its subcellular location is the cytoplasm. The protein resides in the nucleus. This is DUF1769 family protein from Schizosaccharomyces pombe (strain 972 / ATCC 24843) (Fission yeast).